We begin with the raw amino-acid sequence, 1306 residues long: Angiotensin-converting enzyme (1306 aa).

A signal peptide spans 1-28 (MGAASGRRSPPLLLPLLLLLLPPPPVIL). The Extracellular segment spans residues 29-1256 (ELDPALQPGN…GLNLEEQQAR (1228 aa)). Peptidase M2 domains lie at 40–624 (PADE…LGWP) and 643–1222 (VSDE…LGWP). N-linked (GlcNAc...) asparagine glycosylation is found at Asn54, Asn74, Asn111, Asn146, and Asn160. Cys157 and Cys165 form a disulfide bridge. A chloride-binding site is contributed by Tyr231. An N-linked (GlcNAc...) asparagine glycan is attached at Asn318. Cys359 and Cys377 form a disulfide bridge. Residue His390 coordinates Zn(2+). The active-site Proton acceptor 1 is the Glu391. The Zn(2+) site is built by His394 and Glu418. Asn445 and Asn509 each carry an N-linked (GlcNAc...) asparagine glycan. The active-site Proton donor 1 is the His520. The N-linked (GlcNAc...) asparagine glycan is linked to Asn523. Arg529 is a binding site for chloride. Cys545 and Cys557 form a disulfide bridge. Asn673, Asn695, Asn714, and Asn760 each carry an N-linked (GlcNAc...) asparagine glycan. An intrachain disulfide couples Cys757 to Cys763. Positions 791 and 829 each coordinate chloride. A glycan (N-linked (GlcNAc...) asparagine) is linked at Asn942. An intrachain disulfide couples Cys957 to Cys975. His988 is a Zn(2+) binding site. Glu989 acts as the Proton acceptor 2 in catalysis. His992 and Glu1016 together coordinate Zn(2+). Residues Trp1090 and Arg1094 each contribute to the chloride site. His1118 functions as the Proton donor 2 in the catalytic mechanism. Arg1127 is a binding site for chloride. Cys1143 and Cys1155 are joined by a disulfide. N-linked (GlcNAc...) asparagine glycans are attached at residues Asn1191 and Asn1225. A juxtamembrane stalk region spans residues 1215 to 1256 (HGEKLGWPQYNWTPNSARLEGPFVGSGRVNFLGLNLEEQQAR). The helical transmembrane segment at 1257 to 1277 (VGQWVLLFLGVALLVATLGLT) threads the bilayer. Residues 1278 to 1306 (QRLFSIRHHSLRRPHRGPQFGSEVELRHS) lie on the Cytoplasmic side of the membrane. Ser1299 is subject to Phosphoserine.

It belongs to the peptidase M2 family. Monomer and homodimer; homodimerizes following binding to an inhibitor. Interacts with calmodulin (CALM1, CALM2 or CALM3); interaction takes place in the cytoplasmic region and regulates phosphorylation and proteolytic cleavage. The cofactor is Zn(2+). It depends on chloride as a cofactor. Produced following proteolytic cleavage by secretase enzymes that cleave the transmembrane form in the juxtamembrane stalk region upstream of the transmembrane region. Cleavage can take place at different sites of the juxtamembrane stalk region. In terms of processing, phosphorylated by CK2 on Ser-1299; which allows membrane retention. Phosphorylated on tyrosine residues on its extracellular part, promoting cleavage by secretase enzymes and formation of the soluble form (Angiotensin-converting enzyme, soluble form).

It localises to the cell membrane. Its subcellular location is the cytoplasm. The protein localises to the secreted. The enzyme catalyses Release of a C-terminal dipeptide, oligopeptide-|-Xaa-Yaa, when Xaa is not Pro, and Yaa is neither Asp nor Glu. Thus, conversion of angiotensin I to angiotensin II, with increase in vasoconstrictor activity, but no action on angiotensin II.. It catalyses the reaction angiotensin I + H2O = L-histidyl-L-leucine + angiotensin II. It carries out the reaction bradykinin + H2O = L-Phe-L-Arg + bradykinin(1-7). The catalysed reaction is substance P + H2O = substance P(1-9) + L-Leu-L-Met-NH2. The enzyme catalyses substance P + H2O = substance P(1-8) + Gly-L-Leu-L-Met-NH2. It catalyses the reaction substance P + H2O = L-Phe-L-Phe-Gly-L-Leu-L-Met-NH2 + substance P(1-6). It carries out the reaction neurotensin + H2O = neurotensin(1-11) + L-isoleucyl-L-leucine. The catalysed reaction is goralatide + H2O = N-acetyl-L-seryl-L-aspartate + L-lysyl-L-proline. The enzyme catalyses Met-enkephalin + H2O = L-phenylalanyl-L-methionine + L-tyrosylglycylglycine. It catalyses the reaction Leu-enkephalin + H2O = L-tyrosylglycylglycine + L-phenylalanyl-L-leucine. It carries out the reaction Met-enkephalin-Arg-Phe + H2O = L-arginyl-L-phenylalanine + Met-enkephalin. With respect to regulation, the dipeptidyl carboxypeptidase activity is strongly activated by chloride. The dipeptidyl carboxypeptidase activity is specifically inhibited by lisinopril, captopril and enalaprilat. Functionally, dipeptidyl carboxypeptidase that removes dipeptides from the C-terminus of a variety of circulating hormones, such as angiotensin I, bradykinin or enkephalins, thereby playing a key role in the regulation of blood pressure, electrolyte homeostasis or synaptic plasticity. Composed of two similar catalytic domains, each possessing a functional active site, with different selectivity for substrates. Plays a major role in the angiotensin-renin system that regulates blood pressure and sodium retention by the kidney by converting angiotensin I to angiotensin II, resulting in an increase of the vasoconstrictor activity of angiotensin. Also able to inactivate bradykinin, a potent vasodilator, and therefore enhance the blood pressure response. Acts as a regulator of synaptic transmission by mediating cleavage of neuropeptide hormones, such as substance P, neurotensin or enkephalins. Catalyzes degradation of different enkephalin neuropeptides (Met-enkephalin, Leu-enkephalin, Met-enkephalin-Arg-Phe and possibly Met-enkephalin-Arg-Gly-Leu). Acts as a regulator of synaptic plasticity in the nucleus accumbens of the brain by mediating cleavage of Met-enkephalin-Arg-Phe, a strong ligand of Mu-type opioid receptor OPRM1, into Met-enkephalin. Met-enkephalin-Arg-Phe cleavage by ACE decreases activation of OPRM1, leading to long-term synaptic potentiation of glutamate release. Also acts as a regulator of hematopoietic stem cell differentiation by mediating degradation of hemoregulatory peptide N-acetyl-SDKP (AcSDKP). Acts as a regulator of cannabinoid signaling pathway by mediating degradation of hemopressin, an antagonist peptide of the cannabinoid receptor CNR1. Involved in amyloid-beta metabolism by catalyzing degradation of Amyloid-beta protein 40 and Amyloid-beta protein 42 peptides, thereby preventing plaque formation. Catalyzes cleavage of cholecystokinin (maturation of Cholecystokinin-8 and Cholecystokinin-5) and Gonadoliberin-1 (both maturation and degradation) hormones. Degradation of hemoregulatory peptide N-acetyl-SDKP (AcSDKP) and amyloid-beta proteins is mediated by the N-terminal catalytic domain, while angiotensin I and cholecystokinin cleavage is mediated by the C-terminal catalytic region. Its function is as follows. Soluble form that is released in blood plasma and other body fluids following proteolytic cleavage in the juxtamembrane stalk region. This is Angiotensin-converting enzyme from Bos taurus (Bovine).